The primary structure comprises 272 residues: Small ribosomal subunit protein uS2 (272 aa).

Residues Glu224–Gln233 are compositionally biased toward basic and acidic residues. Positions Glu224–Glu272 are disordered. A compositionally biased stretch (acidic residues) spans Glu256–Glu272.

Belongs to the universal ribosomal protein uS2 family.

The sequence is that of Small ribosomal subunit protein uS2 from Corynebacterium glutamicum (strain ATCC 13032 / DSM 20300 / JCM 1318 / BCRC 11384 / CCUG 27702 / LMG 3730 / NBRC 12168 / NCIMB 10025 / NRRL B-2784 / 534).